A 134-amino-acid polypeptide reads, in one-letter code: Thionin-2.2 (134 aa).

The first 24 residues, 1-24, serve as a signal peptide directing secretion; the sequence is MEGKTVISSLLIMSLVLAQIQVEA. 3 disulfide bridges follow: Cys-27–Cys-64, Cys-28–Cys-56, and Cys-40–Cys-50. Residues 71-134 constitute a propeptide, acidic domain; sequence DILENSGDAV…GGSTAAVKSA (64 aa).

Belongs to the plant thionin (TC 1.C.44) family. In terms of tissue distribution, low basal expression in seedlings. Also detected in rosette leaves.

Its subcellular location is the secreted. Its function is as follows. Thionins are small plant proteins which are toxic to animal cells. They seem to exert their toxic effect at the level of the cell membrane. Their precise function is not known. The polypeptide is Thionin-2.2 (THI2.2) (Arabidopsis thaliana (Mouse-ear cress)).